Reading from the N-terminus, the 234-residue chain is Phosphoribosylaminoimidazole-succinocarboxamide synthase (234 aa).

It belongs to the SAICAR synthetase family.

It catalyses the reaction 5-amino-1-(5-phospho-D-ribosyl)imidazole-4-carboxylate + L-aspartate + ATP = (2S)-2-[5-amino-1-(5-phospho-beta-D-ribosyl)imidazole-4-carboxamido]succinate + ADP + phosphate + 2 H(+). It functions in the pathway purine metabolism; IMP biosynthesis via de novo pathway; 5-amino-1-(5-phospho-D-ribosyl)imidazole-4-carboxamide from 5-amino-1-(5-phospho-D-ribosyl)imidazole-4-carboxylate: step 1/2. This is Phosphoribosylaminoimidazole-succinocarboxamide synthase from Clostridium botulinum (strain Okra / Type B1).